Reading from the N-terminus, the 257-residue chain is ABC transporter ATP-binding protein YxdL (257 aa).

Residues Leu5–Ser243 form the ABC transporter domain. Position 40–47 (Gly40–Thr47) interacts with ATP.

This sequence belongs to the ABC transporter superfamily. As to quaternary structure, the complex is composed of two ATP-binding proteins (YxdL) and two transmembrane proteins (YxdM).

Functionally, part of the ABC transporter complex YxdLM which could be involved in peptide resistance. Responsible for energy coupling to the transport system. This chain is ABC transporter ATP-binding protein YxdL (yxdL), found in Bacillus subtilis (strain 168).